The primary structure comprises 520 residues: Glucose starvation modulator protein 1 (520 aa).

The zn(2)-C6 fungal-type DNA-binding region spans 20 to 48; the sequence is CSFCHSKHLQCSNNRPCKNCVKRNIADQC. 2 disordered regions span residues 63-104 and 194-213; these read AKNK…SSGR and PASP…PNEM. Residues 74 to 85 are compositionally biased toward low complexity; sequence SLESSSSPFSPL. Residues 90 to 104 show a composition bias toward polar residues; the sequence is INSQSSQPLDPSSGR. The PAS domain occupies 376–445; the sequence is DYEKLSHLNS…FKLFKSVAVG (70 aa).

The protein belongs to the ERT1/acuK family.

It localises to the nucleus. Functionally, transcription factor which regulates nonfermentable carbon utilization. This chain is Glucose starvation modulator protein 1 (GSM1), found in Meyerozyma guilliermondii (strain ATCC 6260 / CBS 566 / DSM 6381 / JCM 1539 / NBRC 10279 / NRRL Y-324) (Yeast).